The chain runs to 266 residues: Tryptophan synthase alpha chain (266 aa).

Catalysis depends on proton acceptor residues Glu49 and Asp60.

This sequence belongs to the TrpA family. As to quaternary structure, tetramer of two alpha and two beta chains.

It carries out the reaction (1S,2R)-1-C-(indol-3-yl)glycerol 3-phosphate + L-serine = D-glyceraldehyde 3-phosphate + L-tryptophan + H2O. Its pathway is amino-acid biosynthesis; L-tryptophan biosynthesis; L-tryptophan from chorismate: step 5/5. The alpha subunit is responsible for the aldol cleavage of indoleglycerol phosphate to indole and glyceraldehyde 3-phosphate. The protein is Tryptophan synthase alpha chain of Trichormus variabilis (strain ATCC 29413 / PCC 7937) (Anabaena variabilis).